Here is a 308-residue protein sequence, read N- to C-terminus: ADP-L-glycero-D-manno-heptose-6-epimerase (308 aa).

Residues 10–11, 31–32, Lys38, Lys53, 75–79, and Asn92 contribute to the NADP(+) site; these read MI, DN, and EGACS. The active-site Proton acceptor is Tyr139. Lys143 is an NADP(+) binding site. Asn168 lines the substrate pocket. Val169 and Lys177 together coordinate NADP(+). Residue Lys177 is the Proton acceptor of the active site. Substrate-binding positions include Ser179, His186, 200–203, Arg208, and Tyr271; that span reads FAGS.

It belongs to the NAD(P)-dependent epimerase/dehydratase family. HldD subfamily. Homopentamer. Requires NADP(+) as cofactor.

The enzyme catalyses ADP-D-glycero-beta-D-manno-heptose = ADP-L-glycero-beta-D-manno-heptose. It participates in nucleotide-sugar biosynthesis; ADP-L-glycero-beta-D-manno-heptose biosynthesis; ADP-L-glycero-beta-D-manno-heptose from D-glycero-beta-D-manno-heptose 7-phosphate: step 4/4. Functionally, catalyzes the interconversion between ADP-D-glycero-beta-D-manno-heptose and ADP-L-glycero-beta-D-manno-heptose via an epimerization at carbon 6 of the heptose. The protein is ADP-L-glycero-D-manno-heptose-6-epimerase of Mannheimia succiniciproducens (strain KCTC 0769BP / MBEL55E).